The sequence spans 266 residues: Translation initiation factor 2 subunit alpha (266 aa).

Residues 12-83 (GEILIATVKQ…RKGTVDVSLK (72 aa)) enclose the S1 motif domain.

This sequence belongs to the eIF-2-alpha family. In terms of assembly, heterotrimer composed of an alpha, a beta and a gamma chain.

In terms of biological role, eIF-2 functions in the early steps of protein synthesis by forming a ternary complex with GTP and initiator tRNA. The polypeptide is Translation initiation factor 2 subunit alpha (Saccharolobus islandicus (strain M.16.27) (Sulfolobus islandicus)).